The sequence spans 334 residues: Ornithine carbamoyltransferase (334 aa).

Carbamoyl phosphate contacts are provided by residues 57–60 (STRT), Gln84, Arg108, and 135–138 (HPTQ). L-ornithine is bound by residues Asn169, Asp233, and 237–238 (SM). Carbamoyl phosphate contacts are provided by residues 275 to 276 (CL) and Arg320.

This sequence belongs to the aspartate/ornithine carbamoyltransferase superfamily. OTCase family.

It is found in the cytoplasm. The enzyme catalyses carbamoyl phosphate + L-ornithine = L-citrulline + phosphate + H(+). The protein operates within amino-acid biosynthesis; L-arginine biosynthesis; L-arginine from L-ornithine and carbamoyl phosphate: step 1/3. Functionally, reversibly catalyzes the transfer of the carbamoyl group from carbamoyl phosphate (CP) to the N(epsilon) atom of ornithine (ORN) to produce L-citrulline. This chain is Ornithine carbamoyltransferase, found in Aliivibrio fischeri (strain ATCC 700601 / ES114) (Vibrio fischeri).